We begin with the raw amino-acid sequence, 294 residues long: 4-hydroxy-tetrahydrodipicolinate synthase (294 aa).

Thr44 is a binding site for pyruvate. Tyr132 functions as the Proton donor/acceptor in the catalytic mechanism. Lys160 (schiff-base intermediate with substrate) is an active-site residue. Residue Val202 coordinates pyruvate.

Belongs to the DapA family. Homotetramer; dimer of dimers.

Its subcellular location is the cytoplasm. The enzyme catalyses L-aspartate 4-semialdehyde + pyruvate = (2S,4S)-4-hydroxy-2,3,4,5-tetrahydrodipicolinate + H2O + H(+). It participates in amino-acid biosynthesis; L-lysine biosynthesis via DAP pathway; (S)-tetrahydrodipicolinate from L-aspartate: step 3/4. In terms of biological role, catalyzes the condensation of (S)-aspartate-beta-semialdehyde [(S)-ASA] and pyruvate to 4-hydroxy-tetrahydrodipicolinate (HTPA). This is 4-hydroxy-tetrahydrodipicolinate synthase from Leptospira borgpetersenii serovar Hardjo-bovis (strain L550).